Consider the following 360-residue polypeptide: Vomilenine reductase (360 aa).

The region spanning 23–351 (GLLSPFNFSR…KADVKYRFVI (329 aa)) is the Enoyl reductase (ER) domain. Zn(2+) is bound at residue Cys-50. Position 52 (Ser-52) interacts with an alcohol. Ser-52 contributes to the NADP(+) binding site. Zn(2+)-binding residues include Asp-53, His-72, Glu-73, Cys-103, Cys-106, Cys-109, Cys-117, and Cys-166. Residue His-72 participates in an alcohol binding. Residues Leu-192, Gly-194, Leu-195, Ser-214, Thr-215, Ser-216, Lys-219, Lys-220, Val-277, Ala-279, Ser-301, and Arg-348 each contribute to the NADP(+) site.

Belongs to the zinc-containing alcohol dehydrogenase family. Class-P subfamily. Homodimer. The cofactor is Zn(2+). As to expression, confined to roots.

It is found in the cytoplasm. The catalysed reaction is (2R)-1,2-dihydrovomilenine + NADP(+) = vomilenine + NADPH + H(+). The protein operates within alkaloid biosynthesis; ajmaline biosynthesis. Inhibited by EDTA and p-hydroxymercuribenzoate, a sulfhydryl reagent. Functionally, alcohol dehydrogenase involved in the biosynthesis of ajmaline-type monoterpenoid indole alkaloids (MIAs) natural products, important plant-derived pharmaceuticals used in the therapy of heart disorders. Catalyzes the conversion of vomilenine to 1,2-dihydrovomilenine, an intermediate chemical in the biosynthesis of ajmaline. The polypeptide is Vomilenine reductase (Rauvolfia serpentina (Serpentine wood)).